We begin with the raw amino-acid sequence, 185 residues long: Elongation factor P (185 aa).

It belongs to the elongation factor P family.

It is found in the cytoplasm. Its pathway is protein biosynthesis; polypeptide chain elongation. Involved in peptide bond synthesis. Stimulates efficient translation and peptide-bond synthesis on native or reconstituted 70S ribosomes in vitro. Probably functions indirectly by altering the affinity of the ribosome for aminoacyl-tRNA, thus increasing their reactivity as acceptors for peptidyl transferase. This chain is Elongation factor P, found in Clostridium kluyveri (strain ATCC 8527 / DSM 555 / NBRC 12016 / NCIMB 10680 / K1).